Consider the following 82-residue polypeptide: M-zodatoxin-Lt3a (82 aa).

The signal sequence occupies residues Met1–Gly22. The propeptide occupies Tyr23–Arg61. Residues Glu58–Arg61 carry the Processing quadruplet motif motif. Alanine amide is present on Ala81.

It belongs to the cationic peptide 03 (latarcin) family. 03 subfamily. In terms of processing, cleavage of the propeptide depends on the processing quadruplet motif (XXXR, with at least one of X being E). In terms of tissue distribution, expressed by the venom gland.

The protein localises to the secreted. It localises to the target cell membrane. In terms of biological role, it has antimicrobial activity against Gram-positive bacteria (A.globiformis VKM Ac-1112 (MIC=0.3 uM), and B.subtilis VKM B-501 (MIC=1.2 uM)), Gram-negative bacteria (E.coli DH5-alpha (MIC=2.5 uM), E.coli MH1 (MIC=6.0 uM), and P.aeruginosa PAO1 (MIC&gt;40 uM)), and yeasts (P.pastoris GS115 (MIC=20 uM), and S.cerevisiae Y190 (MIC=20 uM)). Causes paralysis, but is not lethal when injected into insect (M.domestica) larvae. A second study reports antibacterial activity against E.coli (MIC=100 uM) and S.aureus (MIC=84 uM). Furthermore, increases efficacy of antibiotics (chloramphenicol, streptomycin, kanamycin, novobiocin) when tested against E.coli, probably by facilitating their incorporation into the bacteria. The polypeptide is M-zodatoxin-Lt3a (Lachesana tarabaevi (Spider)).